A 1058-amino-acid chain; its full sequence is Carbamoyl phosphate synthase large chain (1058 aa).

Residues 1-401 form a carboxyphosphate synthetic domain region; that stretch reads MPKRTDIQKI…SLLKACRSLE (401 aa). ATP-binding residues include Arg-129, Arg-169, Gly-175, Gly-176, Arg-208, Ile-210, Glu-215, Gly-241, Ile-242, His-243, Gln-284, and Glu-298. Residues 133-327 enclose the ATP-grasp 1 domain; it reads KQLMEELEQP…IAKLAAKIAV (195 aa). Residues Gln-284, Glu-298, and Asn-300 each coordinate Mg(2+). Gln-284, Glu-298, and Asn-300 together coordinate Mn(2+). The tract at residues 402–546 is oligomerization domain; the sequence is IGVHHNEIPE…YSTYGWENES (145 aa). Residues 547–929 form a carbamoyl phosphate synthetic domain region; sequence IRSDKESVLV…ALYKAFEASY (383 aa). The ATP-grasp 2 domain occupies 671-861; sequence EQALKELDIP…MAQVATKLIL (191 aa). Residues Arg-707, Ser-746, Ile-748, Glu-752, Gly-777, Val-778, His-779, Ser-780, Gln-820, and Glu-832 each contribute to the ATP site. 3 residues coordinate Mg(2+): Gln-820, Glu-832, and Asn-834. Mn(2+) is bound by residues Gln-820, Glu-832, and Asn-834. The 129-residue stretch at 930–1058 folds into the MGS-like domain; that stretch reads LHLPTFGNVV…ESRSFVTEAI (129 aa). The tract at residues 930–1058 is allosteric domain; it reads LHLPTFGNVV…ESRSFVTEAI (129 aa).

Belongs to the CarB family. In terms of assembly, composed of two chains; the small (or glutamine) chain promotes the hydrolysis of glutamine to ammonia, which is used by the large (or ammonia) chain to synthesize carbamoyl phosphate. Tetramer of heterodimers (alpha,beta)4. It depends on Mg(2+) as a cofactor. Mn(2+) is required as a cofactor.

The enzyme catalyses hydrogencarbonate + L-glutamine + 2 ATP + H2O = carbamoyl phosphate + L-glutamate + 2 ADP + phosphate + 2 H(+). It carries out the reaction hydrogencarbonate + NH4(+) + 2 ATP = carbamoyl phosphate + 2 ADP + phosphate + 2 H(+). It participates in amino-acid biosynthesis; L-arginine biosynthesis; carbamoyl phosphate from bicarbonate: step 1/1. The protein operates within pyrimidine metabolism; UMP biosynthesis via de novo pathway; (S)-dihydroorotate from bicarbonate: step 1/3. In terms of biological role, large subunit of the glutamine-dependent carbamoyl phosphate synthetase (CPSase). CPSase catalyzes the formation of carbamoyl phosphate from the ammonia moiety of glutamine, carbonate, and phosphate donated by ATP, constituting the first step of 2 biosynthetic pathways, one leading to arginine and/or urea and the other to pyrimidine nucleotides. The large subunit (synthetase) binds the substrates ammonia (free or transferred from glutamine from the small subunit), hydrogencarbonate and ATP and carries out an ATP-coupled ligase reaction, activating hydrogencarbonate by forming carboxy phosphate which reacts with ammonia to form carbamoyl phosphate. The protein is Carbamoyl phosphate synthase large chain of Streptococcus pneumoniae (strain ATCC BAA-255 / R6).